The primary structure comprises 183 residues: ATP-dependent protease subunit HslV (183 aa).

The active site involves threonine 2. Na(+) contacts are provided by alanine 157, cysteine 160, and threonine 163.

The protein belongs to the peptidase T1B family. HslV subfamily. As to quaternary structure, a double ring-shaped homohexamer of HslV is capped on each side by a ring-shaped HslU homohexamer. The assembly of the HslU/HslV complex is dependent on binding of ATP.

The protein localises to the cytoplasm. It catalyses the reaction ATP-dependent cleavage of peptide bonds with broad specificity.. Allosterically activated by HslU binding. Its function is as follows. Protease subunit of a proteasome-like degradation complex believed to be a general protein degrading machinery. This is ATP-dependent protease subunit HslV from Marinomonas sp. (strain MWYL1).